The following is a 450-amino-acid chain: tRNA-aminoacylation cofactor arc1 (450 aa).

Positions 208 to 278 (QRPSVIKKDK…KEPPKAATPV (71 aa)) are disordered. 2 stretches are compositionally biased toward basic and acidic residues: residues 213-225 (IKKD…EGKP) and 233-247 (SVEK…AKKE). Basic residues predominate over residues 248-261 (KQNKKEKKDKKDKK). Positions 262–272 (DKKEKAPKEPP) are enriched in basic and acidic residues. Residues 278–382 (VPSMIDFRIG…ENAEIGDRLT (105 aa)) form the tRNA-binding domain.

This sequence belongs to the tRNA-aminoacylation cofactor ARC1 family. In terms of assembly, component of a yeast aminoacyl-tRNA synthase (aaRS) complex formed by methionyl-tRNA synthase, glutamyl-tRNA synthase and the tRNA aminoacylation cofactor arc1 in a stoichiometric complex. Interacts with rar1/mes1 and gus1.

It is found in the cytoplasm. In terms of biological role, binds to tRNA and functions as a cofactor for the methionyl-tRNA synthetase (MetRS) and glutamyl-tRNA synthetase (GluRS). Forms a complex with MetRS and GluRS and increases their affinity for cognate tRNAs due to the presence of a tRNA binding domain in its middle and C-terminal part. This is tRNA-aminoacylation cofactor arc1 from Schizosaccharomyces pombe (strain 972 / ATCC 24843) (Fission yeast).